The sequence spans 310 residues: Probable endonuclease 4 (310 aa).

The interval 1–31 (MNNQQSRGALGTSGATPDLPDATPGLSRNPV) is disordered. Zn(2+) contacts are provided by histidine 94, histidine 134, glutamate 173, aspartate 207, histidine 210, histidine 244, aspartate 257, histidine 259, and glutamate 289.

The protein belongs to the AP endonuclease 2 family. It depends on Zn(2+) as a cofactor.

The enzyme catalyses Endonucleolytic cleavage to 5'-phosphooligonucleotide end-products.. Functionally, endonuclease IV plays a role in DNA repair. It cleaves phosphodiester bonds at apurinic or apyrimidinic (AP) sites, generating a 3'-hydroxyl group and a 5'-terminal sugar phosphate. In Streptomyces avermitilis (strain ATCC 31267 / DSM 46492 / JCM 5070 / NBRC 14893 / NCIMB 12804 / NRRL 8165 / MA-4680), this protein is Probable endonuclease 4.